A 620-amino-acid polypeptide reads, in one-letter code: Protein phosphatase 2C-like domain-containing protein 1 (620 aa).

Positions 173–611 (GIAICSNNNS…DSITVMVMFL (439 aa)) constitute a PPM-type phosphatase domain.

Belongs to the PP2C family.

This is Protein phosphatase 2C-like domain-containing protein 1 (Pp2d1) from Mus musculus (Mouse).